Reading from the N-terminus, the 185-residue chain is Photosystem I assembly protein Ycf4 (185 aa).

A run of 2 helical transmembrane segments spans residues 24–44 (YIIG…SISS) and 66–86 (IIMG…WYMV).

Belongs to the Ycf4 family.

Its subcellular location is the cellular thylakoid membrane. Seems to be required for the assembly of the photosystem I complex. This is Photosystem I assembly protein Ycf4 from Prochlorococcus marinus (strain MIT 9312).